The sequence spans 369 residues: CASP-like protein 4U1 (369 aa).

The tract at residues 1–162 is disordered; that stretch reads MASTPRTPAP…RAETKLPLSS (162 aa). At 1–222 the chain is on the cytoplasmic side; the sequence is MASTPRTPAP…AVAAVAERRE (222 aa). Positions 7 to 23 are enriched in pro residues; that stretch reads TPAPERSPPPVPTPPPP. Positions 36–51 are enriched in basic and acidic residues; the sequence is SPREEASFSSDGREGA. Composition is skewed to low complexity over residues 87 to 96 and 114 to 127; these read ANKAAAATAE and SSQT…SPTP. Residues 223–243 traverse the membrane as a helical segment; sequence LLLALRLATAVLSLAAFSVIA. The Extracellular portion of the chain corresponds to 244 to 262; sequence SARTSGWAGDYYARHLQYR. A helical transmembrane segment spans residues 263 to 283; it reads YAVAVNVIVFAYSVAQSLGKI. At 284-300 the chain is on the cytoplasmic side; that stretch reads RHLVSPRFTFRTMSSYY. Residues 301–321 form a helical membrane-spanning segment; that stretch reads CSLFLDQVLAYLLMSASSAAA. The Extracellular segment spans residues 322–339; sequence SRNDLWVSRFGTDAFVRK. The chain crosses the membrane as a helical span at residues 340–360; the sequence is ITGALWLSFVAFLVLALNAVI. Residues 361–369 lie on the Cytoplasmic side of the membrane; it reads SXANLFSMV.

It belongs to the Casparian strip membrane proteins (CASP) family. Homodimer and heterodimers.

It localises to the cell membrane. This is CASP-like protein 4U1 from Zea mays (Maize).